The following is a 284-amino-acid chain: Bifunctional protein FolD (284 aa).

Residue 166 to 168 (GAS) participates in NADP(+) binding.

This sequence belongs to the tetrahydrofolate dehydrogenase/cyclohydrolase family. In terms of assembly, homodimer.

The enzyme catalyses (6R)-5,10-methylene-5,6,7,8-tetrahydrofolate + NADP(+) = (6R)-5,10-methenyltetrahydrofolate + NADPH. It catalyses the reaction (6R)-5,10-methenyltetrahydrofolate + H2O = (6R)-10-formyltetrahydrofolate + H(+). It functions in the pathway one-carbon metabolism; tetrahydrofolate interconversion. Its function is as follows. Catalyzes the oxidation of 5,10-methylenetetrahydrofolate to 5,10-methenyltetrahydrofolate and then the hydrolysis of 5,10-methenyltetrahydrofolate to 10-formyltetrahydrofolate. The sequence is that of Bifunctional protein FolD from Legionella pneumophila subsp. pneumophila (strain Philadelphia 1 / ATCC 33152 / DSM 7513).